The sequence spans 248 residues: Type II methyltransferase M.AquIA (248 aa).

In terms of domain architecture, SAM-dependent MTase C5-type spans 3–248 (KKLISLFSGA…IKDRIKNHGY (246 aa)). The active site involves Cys82.

The protein belongs to the class I-like SAM-binding methyltransferase superfamily. C5-methyltransferase family. In terms of assembly, heterodimer of an alpha and a beta subunit.

It carries out the reaction a 2'-deoxycytidine in DNA + S-adenosyl-L-methionine = a 5-methyl-2'-deoxycytidine in DNA + S-adenosyl-L-homocysteine + H(+). A methylase, recognizes the double-stranded sequence 5'-CYCGRG-3', methylates C-1 on both strands, and protects the DNA from cleavage by the AquI endonuclease. The polypeptide is Type II methyltransferase M.AquIA (aquIMA) (Picosynechococcus sp. (strain ATCC 27264 / PCC 7002 / PR-6) (Agmenellum quadruplicatum)).